Reading from the N-terminus, the 268-residue chain is Microtubule-associated protein RP/EB family member 1 (268 aa).

A2 carries the N-acetylalanine modification. The region spanning 14–116 (NLSRHDMLAW…FVQWFKKFFD (103 aa)) is the Calponin-homology (CH) domain. K66 carries the post-translational modification N6-crotonyllysine. The residue at position 124 (Y124) is a Phosphotyrosine. The segment at 124–268 (YDPVAARQGQ…GGPQEEQEEY (145 aa)) is interaction with MTUS2/TIP150. Residues 146–180 (LSKPKKPLGSSTAAPQRPIATQRTTAAPKAGPGMV) form a disordered region. A compositionally biased stretch (polar residues) spans 154-170 (GSSTAAPQRPIATQRTT). S155 carries the post-translational modification Phosphoserine. The region spanning 185 to 255 (GVGNGDDEAA…LYATDEGFVI (71 aa)) is the EB1 C-terminal domain. An interaction with APC region spans residues 206–211 (TVEDLE). The DCTN1-binding stretch occupies residues 208-268 (EDLEKERDFY…GGPQEEQEEY (61 aa)). Residue K220 is modified to N6-acetyllysine. The APC-binding stretch occupies residues 220-242 (KLRNIELICQENEGENDPVLQRI). The interval 232-255 (EGENDPVLQRIVDILYATDEGFVI) is interaction with SKA1.

The protein belongs to the MAPRE family. In terms of assembly, homodimer. Heterodimer with MAPRE3. Interacts (via C-terminal residues 206-211) with APC (via C-terminal residues 2674-2845); the interaction inhibits association with and bundling of F-actin. Interacts with DCTN1, DIAPH1 and DIAPH2. Interacts with DCTN2, TERF1 and dynein intermediate chain. Interacts with CLASP2, DST, KIF2C and STIM1; probably required for their targeting to the growing microtubule plus ends. Interacts with MTUS2; interaction is direct and probably targets MTUS2 to microtubules. Interacts (via C-terminus) with SKA1 (via SXIP motif); the interaction is direct and stabilizes the kinetochore-microtubule attachment of the SKA1 complex. Interacts with APC2. Interacts with CLASP1. Interacts (via C-terminus) with CLIP1. Interacts with SLAIN2 and SLAIN1. Interacts with MACF1. Interacts with KIF18B; this interaction is required for efficient accumulation of KIF18B at microtubule plus ends. Interacts with MISP. Interacts with RABL2/RABL2A; binds preferentially to GTP-bound RABL2. Interacts with KCNAB2. Interacts with KNSTRN. Interacts with NCKAP5L. Interacts with AKAP9. Interacts with PDE4DIP isoform 2/MMG8/SMYLE; this interaction is required for its recruitment to the Golgi apparatus. May form a pericentrosomal complex with AKAP9, CDK5RAP2 and PDE4DIP isoform 2/MMG8/SMYLE; within this complex, MAPRE1 binding to CDK5RAP2 may be mediated by PDE4DIP. Contrary to other mammalian species, does not interact with CDK5RAP2, possibly due to the lack of conservation of the MAPRE1-binding motif in mouse CDK5RAP2. Interacts with AKNA. Interacts with GAS2L1, GAS2L2, and GAS2L3. Interacts with RARRES1 and AGBL2. Post-translationally, acetylation at Lys-220 by KAT2B/PCAF promotes dynamic kinetochore-microtubule interactions in early mitosis. In terms of processing, crotonylated by KAT5 during mitosis, promoting astral microtubule plasticity and dynamic connection between astral microtubules and the cortex during mitotic chromosome segregation, thereby ensuring accurate spindle positioning in mitosis. Decrotonylated by HDAC3. As to expression, expressed within the midpiece of sperm tail (at protein level).

It is found in the cytoplasm. The protein resides in the cytoskeleton. The protein localises to the microtubule organizing center. It localises to the centrosome. Its subcellular location is the spindle. It is found in the spindle pole. Plus-end tracking protein (+TIP) that binds to the plus-end of microtubules and regulates the dynamics of the microtubule cytoskeleton. Recruits other +TIP proteins to microtubules by binding to a conserved Ser-X-Leu-Pro (SXLP) motif in their polypeptide chains. Promotes cytoplasmic microtubule nucleation and elongation. Involved in mitotic spindle positioning by stabilizing microtubules and promoting dynamic connection between astral microtubules and the cortex during mitotic chromosome segregation. Assists chromosome alignment in metaphase by recruiting the SKA complex to the spindle and stabilizing its interactions with microtubule bundles (K-fibers). Also acts as a regulator of minus-end microtubule organization: interacts with the complex formed by AKAP9 and PDE4DIP, leading to recruit CAMSAP2 to the Golgi apparatus, thereby tethering non-centrosomal minus-end microtubules to the Golgi, an important step for polarized cell movement. Promotes elongation of CAMSAP2-decorated microtubule stretches on the minus-end of microtubules. Acts as a regulator of autophagosome transport via interaction with CAMSAP2. Functions downstream of Rho GTPases and DIAPH1 in stable microtubule formation. May play a role in cell migration. This is Microtubule-associated protein RP/EB family member 1 (Mapre1) from Mus musculus (Mouse).